Reading from the N-terminus, the 488-residue chain is UDP-N-acetylmuramoyl-L-alanyl-D-glutamate--2,6-diaminopimelate ligase (488 aa).

Residues leucine 24, serine 26, and 41-43 (HQV) contribute to the UDP-N-acetyl-alpha-D-muramoyl-L-alanyl-D-glutamate site. 113-119 (GTNGKTT) contacts ATP. UDP-N-acetyl-alpha-D-muramoyl-L-alanyl-D-glutamate-binding positions include asparagine 154, 155 to 156 (TT), serine 182, glutamine 188, and arginine 190. Residue lysine 222 is modified to N6-carboxylysine. Meso-2,6-diaminopimelate is bound by residues arginine 386, 410-413 (DNPR), glycine 461, and glutamate 465. A Meso-diaminopimelate recognition motif motif is present at residues 410–413 (DNPR).

Belongs to the MurCDEF family. MurE subfamily. Requires Mg(2+) as cofactor. Carboxylation is probably crucial for Mg(2+) binding and, consequently, for the gamma-phosphate positioning of ATP.

The protein resides in the cytoplasm. It carries out the reaction UDP-N-acetyl-alpha-D-muramoyl-L-alanyl-D-glutamate + meso-2,6-diaminopimelate + ATP = UDP-N-acetyl-alpha-D-muramoyl-L-alanyl-gamma-D-glutamyl-meso-2,6-diaminopimelate + ADP + phosphate + H(+). It participates in cell wall biogenesis; peptidoglycan biosynthesis. Functionally, catalyzes the addition of meso-diaminopimelic acid to the nucleotide precursor UDP-N-acetylmuramoyl-L-alanyl-D-glutamate (UMAG) in the biosynthesis of bacterial cell-wall peptidoglycan. The polypeptide is UDP-N-acetylmuramoyl-L-alanyl-D-glutamate--2,6-diaminopimelate ligase (Haemophilus influenzae (strain ATCC 51907 / DSM 11121 / KW20 / Rd)).